Reading from the N-terminus, the 284-residue chain is Release factor glutamine methyltransferase (284 aa).

S-adenosyl-L-methionine is bound by residues 125-129, glutamate 148, and asparagine 190; that span reads GVGSG. 190–193 contacts substrate; sequence NPPY.

Belongs to the protein N5-glutamine methyltransferase family. PrmC subfamily.

It catalyses the reaction L-glutaminyl-[peptide chain release factor] + S-adenosyl-L-methionine = N(5)-methyl-L-glutaminyl-[peptide chain release factor] + S-adenosyl-L-homocysteine + H(+). Functionally, methylates the class 1 translation termination release factors RF1/PrfA and RF2/PrfB on the glutamine residue of the universally conserved GGQ motif. This is Release factor glutamine methyltransferase from Geobacter sulfurreducens (strain ATCC 51573 / DSM 12127 / PCA).